Reading from the N-terminus, the 350-residue chain is MPVSNAQLTQMFEHVLKLSRVDETQSVAVLKSHYSDPRTVNAAMEAAQRLKAKVYAVELPAFNHPTAMGNDMTAYCGDTALTGNLAAQRALEAADLVVDTMMLLHSPEQEQILKTGTRILLAVEPPEVLARMLPTEDDKRRVLAAETLLKQARSLHVRSKAGSDFHAPLGQYPAVTEYGYADEPGRWDHWPSGFLFTWPNEDSAEGTLVLDVGDIILPFKNYCRERITLEIEKGFITGIHGGFEAEYLRDYMKYFNDPEVYGISHIGWGLQPRAQWTAMGLHDRNDGMCMDARAFYGNFLFSTGPNTEVGGKRKTPCHLDIPLRNCDIYLDDKAVVLAGDVVAPEESRAR.

3 residues coordinate Fe cation: H265, H318, and D320.

Fe(2+) serves as cofactor.

The enzyme catalyses 2,5-dihydroxypyridine + O2 = N-formylmaleamate + H(+). The protein operates within cofactor degradation; nicotinate degradation. Catalyzes the dioxygenolytic ring cleavage of 2,5-dihydroxypyridine between carbons 5 and 6 generating N-formylmaleamate in the aerobic nicotinate degradation pathway. This chain is 2,5-dihydroxypyridine 5,6-dioxygenase (nicX), found in Pseudomonas putida (strain ATCC 47054 / DSM 6125 / CFBP 8728 / NCIMB 11950 / KT2440).